The following is a 325-amino-acid chain: Biotin synthase (325 aa).

One can recognise a Radical SAM core domain in the interval 46–270 (NNSNNIDLCS…IAICKLILPN (225 aa)). [4Fe-4S] cluster is bound by residues cysteine 64, cysteine 68, and cysteine 71. Serine 107, cysteine 139, cysteine 198, and arginine 274 together coordinate [2Fe-2S] cluster.

It belongs to the radical SAM superfamily. Biotin synthase family. Homodimer. [4Fe-4S] cluster serves as cofactor. [2Fe-2S] cluster is required as a cofactor.

The catalysed reaction is (4R,5S)-dethiobiotin + (sulfur carrier)-SH + 2 reduced [2Fe-2S]-[ferredoxin] + 2 S-adenosyl-L-methionine = (sulfur carrier)-H + biotin + 2 5'-deoxyadenosine + 2 L-methionine + 2 oxidized [2Fe-2S]-[ferredoxin]. It participates in cofactor biosynthesis; biotin biosynthesis; biotin from 7,8-diaminononanoate: step 2/2. Its function is as follows. Catalyzes the conversion of dethiobiotin (DTB) to biotin by the insertion of a sulfur atom into dethiobiotin via a radical-based mechanism. The sequence is that of Biotin synthase from Methanococcus aeolicus (strain ATCC BAA-1280 / DSM 17508 / OCM 812 / Nankai-3).